The following is a 490-amino-acid chain: Putative alanine aminotransferase (490 aa).

5 residues coordinate pyridoxal 5'-phosphate: alanine 157, serine 158, tyrosine 183, asparagine 239, and serine 308. Residue lysine 311 is modified to N6-(pyridoxal phosphate)lysine. Arginine 320 is a pyridoxal 5'-phosphate binding site.

It belongs to the class-I pyridoxal-phosphate-dependent aminotransferase family. Alanine aminotransferase subfamily. As to quaternary structure, homodimer. Pyridoxal 5'-phosphate serves as cofactor.

The protein localises to the cytoplasm. It is found in the mitochondrion. The enzyme catalyses L-alanine + 2-oxoglutarate = pyruvate + L-glutamate. The protein operates within amino-acid degradation; L-alanine degradation via transaminase pathway; pyruvate from L-alanine: step 1/1. Its function is as follows. Alanine aminotransferase involved in both alanine biosynthesis and utilization. The polypeptide is Putative alanine aminotransferase (alt1) (Schizosaccharomyces pombe (strain 972 / ATCC 24843) (Fission yeast)).